The chain runs to 517 residues: Squalene epoxidase 6 (517 aa).

The next 2 membrane-spanning stretches (helical) occupy residues 3–23 and 45–65; these read FTHVCLWTLVAFVLTWTVFYL and AADVIIVGAGVGGSALAYALA. FAD-binding positions include 55 to 56, 75 to 76, R83, F88, R156, V172, D336, and M349; these read VG and ER. Residues 447 to 467 form a helical membrane-spanning segment; that stretch reads LVYHLCAITLSSIGQLLSPFP.

It belongs to the squalene monooxygenase family. The cofactor is FAD. In terms of tissue distribution, expressed in seedlings, leaves, stems, inflorescences and siliques.

Its subcellular location is the membrane. It catalyses the reaction squalene + reduced [NADPH--hemoprotein reductase] + O2 = (S)-2,3-epoxysqualene + oxidized [NADPH--hemoprotein reductase] + H2O + H(+). The protein operates within terpene metabolism; lanosterol biosynthesis; lanosterol from farnesyl diphosphate: step 2/3. Its function is as follows. Catalyzes the stereospecific oxidation of squalene to (S)-2,3-epoxysqualene, and is considered to be a rate-limiting enzyme in steroid biosynthesis. This chain is Squalene epoxidase 6 (SQE6), found in Arabidopsis thaliana (Mouse-ear cress).